We begin with the raw amino-acid sequence, 573 residues long: 2-succinyl-5-enolpyruvyl-6-hydroxy-3-cyclohexene-1-carboxylate synthase (573 aa).

This sequence belongs to the TPP enzyme family. MenD subfamily. In terms of assembly, homodimer. The cofactor is Mg(2+). Mn(2+) is required as a cofactor. It depends on thiamine diphosphate as a cofactor.

It catalyses the reaction isochorismate + 2-oxoglutarate + H(+) = 5-enolpyruvoyl-6-hydroxy-2-succinyl-cyclohex-3-ene-1-carboxylate + CO2. It functions in the pathway quinol/quinone metabolism; 1,4-dihydroxy-2-naphthoate biosynthesis; 1,4-dihydroxy-2-naphthoate from chorismate: step 2/7. The protein operates within quinol/quinone metabolism; menaquinone biosynthesis. Functionally, catalyzes the thiamine diphosphate-dependent decarboxylation of 2-oxoglutarate and the subsequent addition of the resulting succinic semialdehyde-thiamine pyrophosphate anion to isochorismate to yield 2-succinyl-5-enolpyruvyl-6-hydroxy-3-cyclohexene-1-carboxylate (SEPHCHC). The chain is 2-succinyl-5-enolpyruvyl-6-hydroxy-3-cyclohexene-1-carboxylate synthase from Shewanella baltica (strain OS195).